The chain runs to 319 residues: Inositol phosphoceramide mannosyltransferase 1 (319 aa).

A helical membrane pass occupies residues 8 to 28 (LLLKGIPICGVILLILWGYSL). N115 and N198 each carry an N-linked (GlcNAc...) asparagine glycan. 2 helical membrane passes run 211–231 (PTVF…KYLL) and 279–299 (VLFF…RVVF).

The protein belongs to the glycosyltransferase 32 family.

The protein localises to the golgi apparatus. It localises to the cis-Golgi network membrane. It is found in the trans-Golgi network membrane. With imt2 and imt3, is required for the synthesis of mannosyl phosphorylinositol ceramide (MIPC). Catalyzes the addition of mannosyl to phosphorylinositol ceramide (IPC). MIPC is essential for cell morphology, cell-surface distribution of ergosterol, localization for plasma-membrane transporters, and lipid-raft-mediated endocytosis of plasma membrane proteins to the vacuole. The protein is Inositol phosphoceramide mannosyltransferase 1 (imt1) of Schizosaccharomyces pombe (strain 972 / ATCC 24843) (Fission yeast).